Here is an 85-residue protein sequence, read N- to C-terminus: Granaticin polyketide synthase acyl carrier protein (85 aa).

The Carrier domain maps to 3 to 81 (RLTLDGLRTI…VLLDLVNGAQ (79 aa)). Serine 41 carries the post-translational modification O-(pantetheine 4'-phosphoryl)serine.

Post-translationally, 4'-phosphopantetheine is transferred from CoA to a specific serine of the apo-ACP-like protein.

Its pathway is antibiotic biosynthesis; granaticin biosynthesis. In terms of biological role, acyl carrier protein. The chain is Granaticin polyketide synthase acyl carrier protein from Streptomyces violaceoruber.